Here is a 419-residue protein sequence, read N- to C-terminus: Histidine--tRNA ligase (419 aa).

This sequence belongs to the class-II aminoacyl-tRNA synthetase family. In terms of assembly, homodimer.

The protein resides in the cytoplasm. The enzyme catalyses tRNA(His) + L-histidine + ATP = L-histidyl-tRNA(His) + AMP + diphosphate + H(+). This Synechococcus sp. (strain JA-3-3Ab) (Cyanobacteria bacterium Yellowstone A-Prime) protein is Histidine--tRNA ligase.